The following is a 247-amino-acid chain: MARLEVDILTLFPRMCAGYLGESILGKAQEAGLLAATITDIRDHATGKHRVCDDAPYGGGAGMVMKPEPLVEAIEAARARLPGAWVVLTSPRGARLDQALARRFAEHGRLILACGRYEGVDERVMTAVDMQVSIGDFVLTGGELAALCVVDAAARLVPGVLGNAASADAESFAGAEGLLEYPQYTRPPEFRGMRVPEVLLSGDHRRIERWRRREALRATRERRPDLFTRVSLPESDLRLIDAGDDEL.

Residues glycine 115 and 134–139 (IGDFVL) each bind S-adenosyl-L-methionine.

The protein belongs to the RNA methyltransferase TrmD family. In terms of assembly, homodimer.

The protein resides in the cytoplasm. It catalyses the reaction guanosine(37) in tRNA + S-adenosyl-L-methionine = N(1)-methylguanosine(37) in tRNA + S-adenosyl-L-homocysteine + H(+). Specifically methylates guanosine-37 in various tRNAs. The chain is tRNA (guanine-N(1)-)-methyltransferase from Anaeromyxobacter dehalogenans (strain 2CP-C).